Here is a 331-residue protein sequence, read N- to C-terminus: NADH-quinone oxidoreductase subunit H (331 aa).

9 helical membrane-spanning segments follow: residues 6–26, 45–65, 78–98, 120–140, 167–187, 193–213, 241–261, 263–283, and 311–331; these read FFIV…ATLA, GPWM…IKLF, FIFL…MSVI, IGIL…LIGG, GLSL…DIVH, ITSW…IAAF, MRWG…SIVI, LIFL…MIFL, and CWKI…FVII.

It belongs to the complex I subunit 1 family. In terms of assembly, NDH-1 is composed of 14 different subunits. Subunits NuoA, H, J, K, L, M, N constitute the membrane sector of the complex.

It localises to the cell inner membrane. The catalysed reaction is a quinone + NADH + 5 H(+)(in) = a quinol + NAD(+) + 4 H(+)(out). NDH-1 shuttles electrons from NADH, via FMN and iron-sulfur (Fe-S) centers, to quinones in the respiratory chain. The immediate electron acceptor for the enzyme in this species is believed to be ubiquinone. Couples the redox reaction to proton translocation (for every two electrons transferred, four hydrogen ions are translocated across the cytoplasmic membrane), and thus conserves the redox energy in a proton gradient. This subunit may bind ubiquinone. The protein is NADH-quinone oxidoreductase subunit H of Campylobacter hominis (strain ATCC BAA-381 / DSM 21671 / CCUG 45161 / LMG 19568 / NCTC 13146 / CH001A).